A 377-amino-acid chain; its full sequence is Glutamate 5-kinase (377 aa).

Lys22 contributes to the ATP binding site. Substrate is bound by residues Ser62, Asp149, and Asn161. ATP contacts are provided by residues Thr181–Asp182 and Thr223–Lys229. The region spanning Arg285–Glu363 is the PUA domain.

Belongs to the glutamate 5-kinase family.

It localises to the cytoplasm. It catalyses the reaction L-glutamate + ATP = L-glutamyl 5-phosphate + ADP. Its pathway is amino-acid biosynthesis; L-proline biosynthesis; L-glutamate 5-semialdehyde from L-glutamate: step 1/2. Its function is as follows. Catalyzes the transfer of a phosphate group to glutamate to form L-glutamate 5-phosphate. The sequence is that of Glutamate 5-kinase from Bifidobacterium animalis subsp. lactis (strain AD011).